The primary structure comprises 789 residues: DNA topoisomerase 4 subunit A (789 aa).

In terms of domain architecture, Topo IIA-type catalytic spans 34–499 (LPDLRDGLKP…EKQKVQDSDF (466 aa)). Tyrosine 122 acts as the O-(5'-phospho-DNA)-tyrosine intermediate in catalysis.

It belongs to the type II topoisomerase GyrA/ParC subunit family. ParC type 2 subfamily. As to quaternary structure, heterotetramer composed of ParC and ParE.

Its subcellular location is the cell membrane. It carries out the reaction ATP-dependent breakage, passage and rejoining of double-stranded DNA.. Functionally, topoisomerase IV is essential for chromosome segregation. It relaxes supercoiled DNA. Performs the decatenation events required during the replication of a circular DNA molecule. In Mycoplasma pneumoniae (strain ATCC 29342 / M129 / Subtype 1) (Mycoplasmoides pneumoniae), this protein is DNA topoisomerase 4 subunit A.